A 338-amino-acid polypeptide reads, in one-letter code: Phenylalanine--tRNA ligase alpha subunit (338 aa).

Residue E253 coordinates Mg(2+).

This sequence belongs to the class-II aminoacyl-tRNA synthetase family. Phe-tRNA synthetase alpha subunit type 1 subfamily. As to quaternary structure, tetramer of two alpha and two beta subunits. Requires Mg(2+) as cofactor.

It is found in the cytoplasm. The catalysed reaction is tRNA(Phe) + L-phenylalanine + ATP = L-phenylalanyl-tRNA(Phe) + AMP + diphosphate + H(+). This is Phenylalanine--tRNA ligase alpha subunit from Citrifermentans bemidjiense (strain ATCC BAA-1014 / DSM 16622 / JCM 12645 / Bem) (Geobacter bemidjiensis).